Reading from the N-terminus, the 158-residue chain is Regulator of sigma D (158 aa).

Belongs to the Rsd/AlgQ family. In terms of assembly, interacts with RpoD.

The protein localises to the cytoplasm. Functionally, binds RpoD and negatively regulates RpoD-mediated transcription activation by preventing the interaction between the primary sigma factor RpoD with the catalytic core of the RNA polymerase and with promoter DNA. May be involved in replacement of the RNA polymerase sigma subunit from RpoD to RpoS during the transition from exponential growth to the stationary phase. The polypeptide is Regulator of sigma D (Shigella boydii serotype 4 (strain Sb227)).